Reading from the N-terminus, the 415-residue chain is Glutamate-1-semialdehyde 2,1-aminomutase (415 aa).

Position 260 is an N6-(pyridoxal phosphate)lysine (Lys-260).

Belongs to the class-III pyridoxal-phosphate-dependent aminotransferase family. HemL subfamily. It depends on pyridoxal 5'-phosphate as a cofactor.

Its subcellular location is the cytoplasm. The enzyme catalyses (S)-4-amino-5-oxopentanoate = 5-aminolevulinate. It participates in porphyrin-containing compound metabolism; protoporphyrin-IX biosynthesis; 5-aminolevulinate from L-glutamyl-tRNA(Glu): step 2/2. The sequence is that of Glutamate-1-semialdehyde 2,1-aminomutase from Methanoculleus marisnigri (strain ATCC 35101 / DSM 1498 / JR1).